Consider the following 358-residue polypeptide: 3-dehydroquinate synthase (358 aa).

NAD(+)-binding positions include 105 to 109 (GVVGD), 129 to 130 (TT), Lys-142, Lys-151, and 169 to 172 (TLKT). Glu-184, His-245, and His-262 together coordinate Zn(2+).

This sequence belongs to the sugar phosphate cyclases superfamily. Dehydroquinate synthase family. Requires NAD(+) as cofactor. The cofactor is Co(2+). Zn(2+) serves as cofactor.

Its subcellular location is the cytoplasm. It catalyses the reaction 7-phospho-2-dehydro-3-deoxy-D-arabino-heptonate = 3-dehydroquinate + phosphate. The protein operates within metabolic intermediate biosynthesis; chorismate biosynthesis; chorismate from D-erythrose 4-phosphate and phosphoenolpyruvate: step 2/7. In terms of biological role, catalyzes the conversion of 3-deoxy-D-arabino-heptulosonate 7-phosphate (DAHP) to dehydroquinate (DHQ). The chain is 3-dehydroquinate synthase from Enterococcus faecalis (strain ATCC 47077 / OG1RF).